We begin with the raw amino-acid sequence, 10746 residues long: Extracellular matrix-binding protein ebh (10746 aa).

A signal peptide spans 1–39 (MNYRDKIQKFSIRKYTVGTFSTVIATLVFLGLNTSQAQA). 2 stretches are compositionally biased toward polar residues: residues 41–59 (ETNQPASALKQKQQNGDTQ) and 67–113 (VQNS…SQNE). Disordered regions lie at residues 41-174 (ETNQ…GNVQ), 246-274 (MPQRQQTSRRSSRIQTRSIESRAAEPRSV), and 1340-1372 (IAGNEKAQAEAGGRPNYKTTGYSQSNPTSDGQR). Positions 120–130 (AAATPTQSAKA) are enriched in low complexity. The segment covering 132-158 (SKHEQSESRAANKKENDNKATHVESHE) has biased composition (basic and acidic residues). Residues 162–173 (VTASDSSDSGNV) are compositionally biased toward polar residues. A compositionally biased stretch (low complexity) spans 248–263 (QRQQTSRRSSRIQTRS). Positions 1356–1372 (YKTTGYSQSNPTSDGQR) are enriched in polar residues. 59 FIVAR domains span residues 2520 to 2576 (AKNH…VNAA), 2606 to 2662 (SKNN…ISDE), 2683 to 2746 (DTHE…VQTA), 2776 to 2832 (AKTK…IAAK), 2860 to 2915 (AKTQ…IRQN), 2943 to 2998 (AKNQ…INTN), 3026 to 3081 (AKTQ…INDK), 3150 to 3208 (AMTK…VNQK), 3276 to 3335 (AMTG…VNNA), 3403 to 3461 (AMGN…VNSA), 3529 to 3587 (AMGN…VTEA), 3655 to 3713 (AMNT…ITQK), 3781 to 3839 (AMAS…VEAA), 3907 to 3965 (AMGN…VEQA), 4033 to 4091 (AMGQ…VTAA), 4159 to 4217 (AMKG…ITQA), 4285 to 4343 (QMGN…VEAA), 4411 to 4469 (AMAN…VENA), 4537 to 4595 (AMGT…INQI), 4663 to 4721 (AMGQ…VDRA), 4789 to 4847 (AMNS…VDNA), 4915 to 4973 (AMGA…INGM), 5041 to 5099 (AMTV…VNSA), 5167 to 5225 (AMKG…ITQA), 5293 to 5351 (AMHS…VEQA), 5419 to 5477 (AMGQ…VERA), 5545 to 5603 (AMTA…VTNA), 5671 to 5729 (AMKG…INQA), 5797 to 5855 (AMTN…VESA), 5923 to 5981 (AMSN…VEQA), 6049 to 6107 (AMNQ…INQK), 6175 to 6232 (AMGN…VQAA), 6300 to 6358 (AMGQ…VEAA), 6426 to 6484 (AMQR…VEQA), 6552 to 6610 (AMDQ…VTAA), 6678 to 6736 (AMNQ…VTQA), 6804 to 6862 (AMER…VEAA), 6930 to 6988 (AMGN…VEAA), 7056 to 7114 (AMDK…INQA), 7182 to 7240 (AMGN…VEQA), 7308 to 7366 (AMTQ…ITAA), 7434 to 7492 (AMTQ…IQQA), 7560 to 7618 (AMTN…VEQA), 7686 to 7744 (AMTQ…VAQA), 7812 to 7870 (AMGT…VTQA), 7938 to 7996 (AMSN…ITRA), 8064 to 8125 (AMDQ…ITNE), 8190 to 8251 (AMDQ…ITNE), 8316 to 8374 (AMEL…VNRA), 8442 to 8500 (AMGN…VEQA), 8568 to 8625 (AMHG…INQA), 8693 to 8751 (LMDA…VTSA), 8819 to 8877 (AMKA…IDQA), 8945 to 9003 (AMEA…VEQL), 9071 to 9129 (AMQA…VEQL), 9197 to 9255 (AMET…VDQA), 9323 to 9377 (SMDQ…VDQA), 9445 to 9504 (VMDQ…VIKL), and 9699 to 9755 (AMET…INGA). Positions 7066–7080 (DNATTKQNQNYTDSS) are enriched in polar residues. The interval 7066 to 7085 (DNATTKQNQNYTDSSPNKKD) is disordered. Positions 10492–10507 (DHSKPSSNSDGQSNSH) are enriched in polar residues. The interval 10492 to 10530 (DHSKPSSNSDGQSNSHLHVGYGTVNHPFNSSPIGHKKKL) is disordered. A helical membrane pass occupies residues 10552-10572 (IKNALGVVGISGLLASFWFFI). The tract at residues 10649-10746 (RRKEDEEDVE…KKKKSKKNKK (98 aa)) is disordered. The segment covering 10664 to 10674 (TDEKVLQDNEH) has biased composition (basic and acidic residues). Over residues 10719-10746 (KGKKSASKKPSKKVAAKKKKKKSKKNKK) the composition is skewed to basic residues.

It is found in the cell membrane. The sequence is that of Extracellular matrix-binding protein ebh (ebh) from Staphylococcus aureus (strain MRSA252).